We begin with the raw amino-acid sequence, 203 residues long: A-type ATP synthase subunit E (203 aa).

The protein belongs to the V-ATPase E subunit family. In terms of assembly, has multiple subunits with at least A(3), B(3), C, D, E, F, H, I and proteolipid K(x).

Its subcellular location is the cell membrane. Functionally, component of the A-type ATP synthase that produces ATP from ADP in the presence of a proton gradient across the membrane. This chain is A-type ATP synthase subunit E, found in Methanococcus maripaludis (strain C7 / ATCC BAA-1331).